Consider the following 89-residue polypeptide: Small ribosomal subunit protein uS15 (89 aa).

The protein belongs to the universal ribosomal protein uS15 family. In terms of assembly, part of the 30S ribosomal subunit. Forms a bridge to the 50S subunit in the 70S ribosome, contacting the 23S rRNA.

Its function is as follows. One of the primary rRNA binding proteins, it binds directly to 16S rRNA where it helps nucleate assembly of the platform of the 30S subunit by binding and bridging several RNA helices of the 16S rRNA. Functionally, forms an intersubunit bridge (bridge B4) with the 23S rRNA of the 50S subunit in the ribosome. The polypeptide is Small ribosomal subunit protein uS15 (Methylorubrum populi (strain ATCC BAA-705 / NCIMB 13946 / BJ001) (Methylobacterium populi)).